The following is a 1382-amino-acid chain: Hepatocyte growth factor receptor (1382 aa).

The first 24 residues, 1–24, serve as a signal peptide directing secretion; that stretch reads MKAPAVLAPGVLVLLFTLVRKSHG. Residues 25-935 are Extracellular-facing; that stretch reads ECEEALAKSK…VQPDQNFTGL (911 aa). The Sema domain maps to 27-516; it reads EEALAKSKMN…TGKKITKIPL (490 aa). N-linked (GlcNAc...) asparagine glycosylation occurs at Asn-45. 4 disulfides stabilise this stretch: Cys-95-Cys-101, Cys-98-Cys-160, Cys-133-Cys-141, and Cys-173-Cys-176. Asn-106 is a glycosylation site (N-linked (GlcNAc...) asparagine). 2 N-linked (GlcNAc...) asparagine glycosylation sites follow: Asn-203 and Asn-359. Intrachain disulfides connect Cys-299/Cys-364 and Cys-386/Cys-398. Asn-400, Asn-406, and Asn-450 each carry an N-linked (GlcNAc...) asparagine glycan. Disulfide bonds link Cys-521/Cys-539, Cys-527/Cys-562, Cys-530/Cys-546, and Cys-542/Cys-552. 3 consecutive IPT/TIG domains span residues 564-656, 658-740, and 743-837; these read PTIY…FSYV, PVIT…FSYQ, and PTVY…LIYV. O-linked (Man) threonine glycosylation is present at Thr-583. Residues Asn-608 and Asn-636 are each glycosylated (N-linked (GlcNAc...) asparagine). Thr-677 is a glycosylation site (O-linked (Man) threonine). A glycan (N-linked (GlcNAc...) asparagine) is linked at Asn-751. O-linked (Man) threonine glycosylation is present at Thr-762. Residues Asn-786, Asn-880, and Asn-931 are each glycosylated (N-linked (GlcNAc...) asparagine). Residues 936-956 traverse the membrane as a helical segment; the sequence is IVGVVSISIILLLLLGLFLWL. Residues 957-1382 lie on the Cytoplasmic side of the membrane; it reads KKRKQIKDLG…QDSVDDEVDT (426 aa). At Ser-967 the chain carries Phosphoserine. Thr-978 carries the post-translational modification Phosphothreonine. Residues Ser-991, Ser-998, and Ser-1001 each carry the phosphoserine modification. Tyr-1004 bears the Phosphotyrosine mark. Residues 1079–1346 form the Protein kinase domain; it reads VHFNEVIGRG…RISAIFSTFI (268 aa). Residues 1085–1093 and Lys-1111 each bind ATP; that span reads IGRGHFGCV. Asp-1205 functions as the Proton acceptor in the catalytic mechanism. The tract at residues 1213–1382 is interaction with RANBP9; sequence LDEKFTVKVA…QDSVDDEVDT (170 aa). Tyr-1231 carries the post-translational modification Phosphotyrosine. Phosphotyrosine; by autocatalysis occurs at positions 1235 and 1236. Thr-1290 carries the phosphothreonine modification. An interaction with MUC20 region spans residues 1321–1360; sequence WHPKAEMRPSFSELVSRISAIFSTFIGEHYVHVNTTYVNV. Residues Tyr-1350 and Tyr-1357 each carry the phosphotyrosine; by autocatalysis modification. Position 1366 is a phosphotyrosine (Tyr-1366).

It belongs to the protein kinase superfamily. Tyr protein kinase family. Heterodimer made of an alpha chain (50 kDa) and a beta chain (145 kDa) which are disulfide linked. Binds PLXNB1. Interacts when phosphorylated with downstream effectors including STAT3, PIK3R1, SRC, PCLG1, GRB2 and GAB1. Interacts with SPSB1, SPSB2 and SPSB4. Interacts with INPP5D/SHIP1. When phosphorylated at Tyr-1357, interacts with INPPL1/SHIP2. Interacts with RANBP9 and RANBP10, as well as SPSB1, SPSB2, SPSB3 and SPSB4. SPSB1 binding occurs in the presence and in the absence of HGF, however HGF treatment has a positive effect on this interaction. Interacts with MUC20; prevents interaction with GRB2 and suppresses hepatocyte growth factor-induced cell proliferation. Interacts with GRB10. Interacts with PTPN1 and PTPN2. Interacts with HSP90AA1 and HSP90AB1; the interaction suppresses MET kinase activity. Interacts with tensin TNS3. Interacts (when phosphorylated) with tensin TNS4 (via SH2 domain); the interaction increases MET protein stability by inhibiting MET endocytosis and subsequent lysosomal degradation. Autophosphorylated in response to ligand binding on Tyr-1235 and Tyr-1236 in the kinase domain leading to further phosphorylation of Tyr-1350 and Tyr-1357 in the C-terminal multifunctional docking site. Dephosphorylated by PTPRJ at Tyr-1350 and Tyr-1366. Dephosphorylated by PTPN1 and PTPN2. Post-translationally, ubiquitinated. Ubiquitination by CBL regulates the receptor stability and activity through proteasomal degradation. In terms of processing, O-mannosylation of IPT/TIG domains by TMEM260 is required for protein maturation. O-mannosylated residues are composed of single mannose glycans that are not elongated or modified.

It localises to the membrane. The catalysed reaction is L-tyrosyl-[protein] + ATP = O-phospho-L-tyrosyl-[protein] + ADP + H(+). With respect to regulation, in its inactive state, the C-terminal tail interacts with the catalytic domain and inhibits the kinase activity. Upon ligand binding, the C-terminal tail is displaced and becomes phosphorylated, thus increasing the kinase activity. Functionally, receptor tyrosine kinase that transduces signals from the extracellular matrix into the cytoplasm by binding to hepatocyte growth factor/HGF ligand. Regulates many physiological processes including proliferation, scattering, morphogenesis and survival. Ligand binding at the cell surface induces autophosphorylation of MET on its intracellular domain that provides docking sites for downstream signaling molecules. Following activation by ligand, interacts with the PI3-kinase subunit PIK3R1, PLCG1, SRC, GRB2, STAT3 or the adapter GAB1. Recruitment of these downstream effectors by MET leads to the activation of several signaling cascades including the RAS-ERK, PI3 kinase-AKT, or PLCgamma-PKC. The RAS-ERK activation is associated with the morphogenetic effects while PI3K/AKT coordinates prosurvival effects. During embryonic development, MET signaling plays a role in gastrulation, development and migration of muscles and neuronal precursors, angiogenesis and kidney formation. In adults, participates in wound healing as well as organ regeneration and tissue remodeling. Also promotes differentiation and proliferation of hematopoietic cells. The sequence is that of Hepatocyte growth factor receptor (MET) from Loxodonta africana (African elephant).